The sequence spans 388 residues: Mycinamicin VIII C21 methyl hydroxylase (388 aa).

His87, Arg91, Arg279, His335, and Cys337 together coordinate heme.

The protein belongs to the cytochrome P450 family. The cofactor is heme.

Its pathway is antibiotic biosynthesis; mycinamicin biosynthesis. Its function is as follows. Involved in the biosynthesis of mycinamicin, a 16-membered macrolide antibiotic. Catalyzes hydroxylation at the C21 methyl group of mycinamicin VIII, the earliest macrolide form in the postpolyketide synthase tailoring pathway, leading to mycinamicin VII. Uses ferredoxin MycCII in electron transfer for catalysis. This Micromonospora griseorubida protein is Mycinamicin VIII C21 methyl hydroxylase.